The primary structure comprises 65 residues: Non-structural protein 5a (65 aa).

The sequence is that of Non-structural protein 5a from Avian infectious bronchitis virus (strain Beaudette) (IBV).